Consider the following 510-residue polypeptide: Putative glycerol-3-phosphate transporter 3 (510 aa).

12 helical membrane-spanning segments follow: residues 31-51 (LSFKQYQAMVFVLTFIAYIAF), 91-111 (ALLGQIDLAFLSVYAVGMFVA), 123-143 (FLTIGMVGTGVCTALFGVAFW), 158-178 (LAGWFQSIGWPCVVAVLGNWF), 185-205 (VIMGVWSAHTSLGNIIGTLIA), 217-237 (FVGPALLITFLGIVVYLFLPV), 279-299 (VGFLAAWKIPGVAPFAFCLFF), 331-351 (GNLSTLFDVGGVVGGILAGYF), 355-375 (LDGRAITAGGFIYLTIPALFL), 378-398 (IYGHVSMTINIILMFVAGLFV), 436-456 (TGSVGAAIGPVLTGYIAAISW), and 459-479 (VFYMLMTAALISGLLLTTLII).

The protein belongs to the major facilitator superfamily. Organophosphate:Pi antiporter (OPA) (TC 2.A.1.4) family.

Its subcellular location is the membrane. The polypeptide is Putative glycerol-3-phosphate transporter 3 (Arabidopsis thaliana (Mouse-ear cress)).